The chain runs to 145 residues: Ribosome maturation factor RimP (145 aa).

This sequence belongs to the RimP family.

It localises to the cytoplasm. Required for maturation of 30S ribosomal subunits. The protein is Ribosome maturation factor RimP of Azotobacter vinelandii (strain DJ / ATCC BAA-1303).